The following is a 119-amino-acid chain: ATP-dependent Clp protease adapter protein ClpS (119 aa).

Belongs to the ClpS family. As to quaternary structure, binds to the N-terminal domain of the chaperone ClpA.

In terms of biological role, involved in the modulation of the specificity of the ClpAP-mediated ATP-dependent protein degradation. The sequence is that of ATP-dependent Clp protease adapter protein ClpS from Marinobacter nauticus (strain ATCC 700491 / DSM 11845 / VT8) (Marinobacter aquaeolei).